Reading from the N-terminus, the 469-residue chain is 3-isopropylmalate dehydratase large subunit (469 aa).

The [4Fe-4S] cluster site is built by Cys349, Cys410, and Cys413.

It belongs to the aconitase/IPM isomerase family. LeuC type 1 subfamily. In terms of assembly, heterodimer of LeuC and LeuD. It depends on [4Fe-4S] cluster as a cofactor.

It catalyses the reaction (2R,3S)-3-isopropylmalate = (2S)-2-isopropylmalate. It functions in the pathway amino-acid biosynthesis; L-leucine biosynthesis; L-leucine from 3-methyl-2-oxobutanoate: step 2/4. In terms of biological role, catalyzes the isomerization between 2-isopropylmalate and 3-isopropylmalate, via the formation of 2-isopropylmaleate. The protein is 3-isopropylmalate dehydratase large subunit of Neisseria meningitidis serogroup A / serotype 4A (strain DSM 15465 / Z2491).